Consider the following 403-residue polypeptide: Semaphorin-like protein A39 (403 aa).

An N-terminal signal peptide occupies residues 1–14 (MIPLLFILFYFANG). One can recognise a Sema domain in the interval 15–403 (IEWHKFETSE…MPQMKKILKM (389 aa)).

The protein belongs to the semaphorin family. Interacts with host VESPR.

The protein resides in the secreted. In terms of biological role, acts as a semaphorin-like protein and binds to host plexin C1 receptor. May alter the movement of host plexin C1-expressing cells including dendritic cells, monocytes, or granulocytes in the proximity of infected cells. May also regulate host cell cytoskeleton of neighboring cells to improve viral infection. In Homo sapiens (Human), this protein is Semaphorin-like protein A39.